The following is a 214-amino-acid chain: Small ribosomal subunit protein uS2 (214 aa).

It belongs to the universal ribosomal protein uS2 family.

In Thermofilum pendens (strain DSM 2475 / Hrk 5), this protein is Small ribosomal subunit protein uS2.